The primary structure comprises 687 residues: Chloride channel protein ClC-Ka (687 aa).

5 consecutive transmembrane segments (helical) span residues 52-72 (FLVALGVLMALISYAMNFAIG), 94-114 (LSWTVYPVALLSFSSGFSQSI), 161-181 (IFLGKVGPFVHLSVMISAYLG), 204-224 (AAAVGVATVFAAPFSGVLFSI), and 236-256 (YWRGFFAATCGAFMFRLLGVF). Glutamate 259, glutamate 261, aspartate 278, and glutamate 281 together coordinate Ca(2+). Helical transmembrane passes span 282–302 (IFFFVALGFICGVLSCAYLFC), 325–345 (PSYAALVALVLASITYPPGVG), 396–416 (FTIFGTLAFFLVMKFWMLILA), 417–437 (TTIPMPAGYFMPIFIIGAAIG), 458–478 (VNPIMPGGYALAGAAAFSGAV), and 486–506 (LLAFELTGQIVHALPVLMAVL). Over 507-687 (AANAISQNCQ…STLINPPAPK (181 aa)) the chain is Cytoplasmic. CBS domains follow at residues 551–609 (MNCN…QPAS) and 626–687 (CPTQ…PAPK).

Belongs to the chloride channel (TC 2.A.49) family. CLCNKA subfamily. As to quaternary structure, homodimer. Interacts with BSND. As to expression, expressed predominantly in the kidney. Expressed strongly in the cortical thick ascending limb and the distal convoluted tubule, with minor expression in the S3 segment of the proximal tubule and the cortical collecting tubule.

It is found in the basolateral cell membrane. It catalyses the reaction chloride(in) = chloride(out). The enzyme catalyses bromide(in) = bromide(out). It carries out the reaction nitrate(in) = nitrate(out). The catalysed reaction is iodide(out) = iodide(in). With respect to regulation, activated by extracellular Ca(2+) and inhibited by extracellular acidic pH. Anion-selective channel permeable to small monovalent anions with ion selectivity for chloride &gt; bromide &gt; nitrate &gt; iodide. Forms a homodimeric channel where each subunit has its own ion conduction pathway. Conducts double-barreled currents controlled by two types of gates, two fast gates that control each subunit independently and a slow common gate that opens and shuts off both subunits simultaneously. Assembles with the regulatory subunit BSND/Barttin for sorting at the basolateral plasma membrane domain. CLCNKA:BSND channels are activated upon membrane hyperpolarization mostly controlled by fast gating. Mediates transepithelial chloride transport from the lumen to interstitial compartment along the thin ascending limb of Henle's loop, contributing to generation of hypertonic medullary interstitium as a countercurrent system to achieve urine concentration. Conducts chloride currents in the stria vascularis of the inner ear to establish the endocochlear potential necessary for normal hearing. The sequence is that of Chloride channel protein ClC-Ka from Rattus norvegicus (Rat).